Consider the following 1233-residue polypeptide: Hemocyanin A-type, units Ode to Odg (1233 aa).

The ODD stretch occupies residues 1–4 (EGNE). The ODE stretch occupies residues 5–422 (YLVRKNVERL…KQDADIDIPL (418 aa)). Position 45 (histidine 45) interacts with Cu cation. Cysteines 51 and 62 form a disulfide. A cross-link (2'-(S-cysteinyl)-histidine (Cys-His)) is located at residues 63–65 (CLH). Cu cation-binding residues include histidine 65, histidine 74, histidine 186, histidine 190, and histidine 217. 2 disulfides stabilise this stretch: cysteine 176/cysteine 243 and cysteine 334/cysteine 340. N-linked (GlcNAc...) asparagine glycosylation is present at asparagine 392. The interval 423–839 (NHIRRNVESL…KEIEKEAVRG (417 aa)) is ODF. Histidine 463 is a binding site for Cu cation. Cysteine 468 and cysteine 478 form a disulfide bridge. Positions 479–481 (CLH) form a cross-link, 2'-(S-cysteinyl)-histidine (Cys-His). Residues histidine 481 and histidine 490 each contribute to the Cu cation site. The N-linked (GlcNAc...) asparagine glycan is linked to asparagine 538. Cystine bridges form between cysteine 589–cysteine 656 and cysteine 743–cysteine 748. Residues histidine 599, histidine 603, and histidine 630 each coordinate Cu cation. The segment at 840-1233 (TIIRKNVNSL…VFLAPAKTTH (394 aa)) is ODG. Residue histidine 880 participates in Cu cation binding. A disulfide bridge connects residues cysteine 886 and cysteine 896. An N-linked (GlcNAc...) asparagine glycan is attached at asparagine 890. Positions 897-899 (CQH) form a cross-link, 2'-(S-cysteinyl)-histidine (Cys-His). Cu cation is bound by residues histidine 899, histidine 908, histidine 1008, histidine 1012, and histidine 1039. 2 disulfides stabilise this stretch: cysteine 998/cysteine 1065 and cysteine 1152/cysteine 1158.

It belongs to the tyrosinase family. Hemocyanin subfamily. As to quaternary structure, decamers of large identical subunits (350 kDa), each containing 7 globular oxygen-binding domains: ODA, ODB, ODC, ODD, ODE, ODF, and ODG. Requires Cu(2+) as cofactor.

Its function is as follows. Hemocyanins are copper-containing oxygen carriers occurring freely dissolved in the hemolymph of many mollusks and arthropods. The protein is Hemocyanin A-type, units Ode to Odg of Enteroctopus dofleini (North Pacific giant octopus).